The chain runs to 285 residues: NAD kinase (285 aa).

The Proton acceptor role is filled by Asp64. NAD(+) contacts are provided by residues 64-65 (DG), 138-139 (ND), Arg149, Arg166, Asp168, Leu176, 179-184 (SGYTIS), and Gln238.

It belongs to the NAD kinase family. The cofactor is a divalent metal cation.

It localises to the cytoplasm. It carries out the reaction NAD(+) + ATP = ADP + NADP(+) + H(+). In terms of biological role, involved in the regulation of the intracellular balance of NAD and NADP, and is a key enzyme in the biosynthesis of NADP. Catalyzes specifically the phosphorylation on 2'-hydroxyl of the adenosine moiety of NAD to yield NADP. In Lawsonia intracellularis (strain PHE/MN1-00), this protein is NAD kinase.